We begin with the raw amino-acid sequence, 749 residues long: Phosphate-regulating neutral endopeptidase PHEX (749 aa).

Residues 1-20 are Cytoplasmic-facing; that stretch reads MEAETGSSVETGKKANRGTR. The helical; Signal-anchor for type II membrane protein transmembrane segment at 21-41 threads the bilayer; that stretch reads IALVVFVGGTLVLGTILFLVS. The Extracellular portion of the chain corresponds to 42–641; the sequence is QGLLSLQAKQ…LNVKGKRTLG (600 aa). In terms of domain architecture, Peptidase M13 spans 53–749; the sequence is YCLKPECIEA…NRGMDSCRLW (697 aa). Cys-54 and Cys-59 are joined by a disulfide. Residues Asn-71, Asn-238, Asn-263, Asn-290, Asn-301, Asn-377, and Asn-484 are each glycosylated (N-linked (GlcNAc...) asparagine). Disulfide bonds link Cys-77-Cys-733, Cys-85-Cys-693, Cys-142-Cys-406, and Cys-617-Cys-746. His-580 contributes to the Zn(2+) binding site. The active site involves Glu-581. Residues His-584 and Glu-642 each contribute to the Zn(2+) site. The Proton donor role is filled by Asp-646. An N-linked (GlcNAc...) asparagine glycan is attached at Asn-736.

The protein belongs to the peptidase M13 family. As to quaternary structure, interacts with MEPE; the interaction is zinc-dependent (via ASARM motif). The cofactor is Zn(2+). In terms of tissue distribution, specifically expressed in ovary. Expressed at low levels in kidney.

The protein localises to the cell membrane. Peptidase that cleaves SIBLING (small integrin-binding ligand, N-linked glycoprotein)-derived ASARM peptides, thus regulating their biological activity. Cleaves ASARM peptides between Ser and Glu or Asp residues. Regulates osteogenic cell differentiation and bone mineralization through the cleavage of the MEPE-derived ASARM peptide. Promotes dentin mineralization and renal phosphate reabsorption by cleaving DMP1- and MEPE-derived ASARM peptides. Inhibits the cleavage of MEPE by CTSB/cathepsin B thus preventing MEPE degradation. This is Phosphate-regulating neutral endopeptidase PHEX (PHEX) from Homo sapiens (Human).